The chain runs to 493 residues: NADH-ubiquinone oxidoreductase 51 kDa subunit, mitochondrial (493 aa).

The transit peptide at Met1–Phe27 directs the protein to the mitochondrion. Gly96–Gly105 contacts NAD(+). Position 212-259 (Gly212–Thr259) interacts with FMN. [4Fe-4S] cluster-binding residues include Cys391, Cys394, Cys397, and Cys437.

The protein belongs to the complex I 51 kDa subunit family. Complex I is composed of about 40 different subunits. This is a component of the flavoprotein-sulfur (FP) fragment of the enzyme. It depends on FMN as a cofactor. The cofactor is [4Fe-4S] cluster.

It localises to the mitochondrion inner membrane. It catalyses the reaction a ubiquinone + NADH + 5 H(+)(in) = a ubiquinol + NAD(+) + 4 H(+)(out). Core subunit of the mitochondrial membrane respiratory chain NADH dehydrogenase (Complex I) that is believed to belong to the minimal assembly required for catalysis. Complex I functions in the transfer of electrons from NADH to the respiratory chain. The immediate electron acceptor for the enzyme is believed to be ubiquinone. The protein is NADH-ubiquinone oxidoreductase 51 kDa subunit, mitochondrial (nuo-51) of Neurospora crassa (strain ATCC 24698 / 74-OR23-1A / CBS 708.71 / DSM 1257 / FGSC 987).